A 463-amino-acid polypeptide reads, in one-letter code: Myocyte-specific enhancer factor 2C (463 aa).

Positions 3–57 constitute an MADS-box domain; sequence RKKIQITRIMDERNRQVTFTKRKFGLMKKAYELSVLCDCEIALIIFNSTNKLFQY. An N6-acetyllysine modification is found at Lys4. The mef2-type DNA-binding region spans 58 to 86; sequence ASTDMDKVLLKYTEYNEPHESRTNSDIVE. Ser59 is subject to Phosphoserine; by CK2. Phosphoserine occurs at positions 98 and 104. 2 positions are modified to N6-acetyllysine: Lys114 and Lys117. Residues 178–223 form a disordered region; it reads NSMSPGVTHRPPSAGNTGGLMGGDLTSGAGTSAGNGYGNPRNSPGL. Phosphoserine is present on residues Ser220 and Ser226. Lys232 and Lys237 each carry N6-acetyllysine. Position 238 is a phosphoserine (Ser238). N6-acetyllysine is present on residues Lys250 and Lys262. Thr283 and Thr290 each carry phosphothreonine; by MAPK7 and MAPK14. Residues 358-389 are transcription repressor; sequence ACTSTHLSQSSNLSLPSTQSLNIKSEPVSPPR. A compositionally biased stretch (polar residues) spans 365–380; the sequence is SQSSNLSLPSTQSLNI. Residues 365-463 are disordered; that stretch reads SQSSNLSLPS…RMRLSEGWAT (99 aa). Lys381 participates in a covalent cross-link: Glycyl lysine isopeptide (Lys-Gly) (interchain with G-Cter in SUMO). Ser386 is modified (phosphoserine; by CDK5). Ser409 bears the Phosphoserine; by MAPK7 mark. Residues 409–422 show a composition bias toward low complexity; that stretch reads SPVDSLSSCSSSYD. Positions 423-433 are enriched in basic and acidic residues; the sequence is GSDREDHRNEF. Position 435 is a phosphoserine (Ser435).

Forms a complex with class II HDACs in undifferentiating cells. On myogenic differentiation, HDACs are released into the cytoplasm allowing MEF2s to interact with other proteins for activation. Interacts with EP300 in differentiating cells; the interaction acetylates MEF2C leading to increased DNA binding and activation. Interacts with HDAC7 and CARM1. Interacts with HDAC4, HDAC7 and HDAC9; the interaction with HDACs represses transcriptional activity. Interacts with LPIN1. Interacts with MYOCD. Interacts with AKAP13. Interacts with FOXK1; the interaction inhibits MEF2C transactivation activity. Interacts (via N-terminus) with HABP4; this interaction decreases DNA-binding activity of MEF2C in myocardial cells in response to mechanical stress. Interacts with JPH2; interaction specifically takes place with the Junctophilin-2 N-terminal fragment cleavage product of JPH2. Interacts (via MADS box) with SOX18. Interacts with PHF7; the interaction promotes MEF2C binding to its transcription targets. Phosphorylated on Ser-59; which enhances DNA binding activity. Phosphorylated on Ser-386; which is required for Lys-381 sumoylation and inhibits transcriptional activity. Post-translationally, acetylated by p300 on several sites in diffentiating myocytes. Acetylation on Lys-4 increases DNA binding and transactivation. In terms of processing, sumoylated on Lys-381 with SUMO2 but not SUMO1; which represses transcriptional activity. Proteolytically cleaved in cerebellar granule neurons on several sites by caspase 3 and caspase 7 following neurotoxicity. Preferentially cleaves the CDK5-mediated hyperphosphorylated form which leads to neuron apoptosis and transcriptional inactivation.

Its subcellular location is the nucleus. It is found in the cytoplasm. The protein resides in the sarcoplasm. Functionally, transcription activator which binds specifically to the MEF2 element present in the regulatory regions of many muscle-specific genes. Controls cardiac morphogenesis and myogenesis, and is also involved in vascular development. Enhances transcriptional activation mediated by SOX18. Plays an essential role in hippocampal-dependent learning and memory by suppressing the number of excitatory synapses and thus regulating basal and evoked synaptic transmission. Crucial for normal neuronal development, distribution, and electrical activity in the neocortex. Necessary for proper development of megakaryocytes and platelets and for bone marrow B-lymphopoiesis. Required for B-cell survival and proliferation in response to BCR stimulation, efficient IgG1 antibody responses to T-cell-dependent antigens and for normal induction of germinal center B-cells. May also be involved in neurogenesis and in the development of cortical architecture. This is Myocyte-specific enhancer factor 2C from Sus scrofa (Pig).